The chain runs to 506 residues: MSGESVIEFTGFIKACRLFRENRLAEAEAVCTNLLRKNPLDQATWALKMQCLSDSTYVDELENEDMGLAETFLDQNVIAPNARPGTSFARPKTSAKGVNPILRPTTNAGRPLSGVVRPQSSFKSGSMDQAVRTARTAKTARAVSSTSARNMRLGTASMAAGADGEFVNLARLNIDKYAADPQVNRQLFEYVFYYLNDIRVAHQIAGTASKAAGFEDYYWKNQLAKCYLRLGMLQDATKQLQSSLEQKKLIETFALLSKAYNRVDQPMAALKTYSAGLEVFPENVTMLTGMARVQEALGEYDESVKLYKRVLDAESNNIEAIACVATTYYYGGKPELAMRYYRRILQMGVSSPELFLNIGLCCMAAQQFDFALSSILRAQSTMTDDVAADVWYNIGQILVDIGDLVSAARSFRIALSHDPDHSESLVNLGILKHREGKIDEARSLYSSATSKNPYMFEGNYNLGLVSFTQGKYHECRELIEKALAAFPEHEHCKKILNHLKPLYESI.

Residues 83 to 112 (RPGTSFARPKTSAKGVNPILRPTTNAGRPL) are disordered. TPR repeat units lie at residues 217 to 250 (YYWK…KKLI), 251 to 283 (ETFA…FPEN), 284 to 317 (VTML…ESNN), 319 to 351 (EAIA…GVSS), 353 to 385 (ELFL…MTDD), 388 to 421 (ADVW…DPDH), 423 to 455 (ESLV…NPYM), and 456 to 489 (FEGN…FPEH).

In terms of assembly, part of BBSome complex, that contains at least bbs-1, bbs-2, bbs-4, bbs-5, osm-12, bbs-8/ttc-8 and bbs-9. As to expression, expressed in head and tail neurons. Expressed in ciliated male tail-neurons. Expressed in thermosensory and CO(2) sensory AFD neurons.

It localises to the cell projection. The protein resides in the cilium. Its subcellular location is the cytoplasm. It is found in the cytoskeleton. The protein localises to the cilium basal body. It localises to the cilium axoneme. In terms of biological role, component of the BBSome complex. The BBSome complex is thought to function as a coat complex required for sorting of specific membrane proteins to the primary cilia. The BBSome complex is required for ciliogenesis but is dispensable for centriolar satellite function. Required for proper BBSome complex assembly and its ciliary localization. Required for cilia biogenesis and both the assembly and movement of intraflagellar transport proteins along the ciliary axoneme. Plays a role in guanylyl cyclase localization in the ring-like structures at the base of the finger compartment in AFD sensory neurons. This is Tetratricopeptide repeat protein 8 from Caenorhabditis elegans.